Consider the following 269-residue polypeptide: Indole-3-glycerol phosphate synthase (269 aa).

This sequence belongs to the TrpC family.

The enzyme catalyses 1-(2-carboxyphenylamino)-1-deoxy-D-ribulose 5-phosphate + H(+) = (1S,2R)-1-C-(indol-3-yl)glycerol 3-phosphate + CO2 + H2O. It participates in amino-acid biosynthesis; L-tryptophan biosynthesis; L-tryptophan from chorismate: step 4/5. The polypeptide is Indole-3-glycerol phosphate synthase (Saccharopolyspora erythraea (strain ATCC 11635 / DSM 40517 / JCM 4748 / NBRC 13426 / NCIMB 8594 / NRRL 2338)).